Reading from the N-terminus, the 126-residue chain is Fluoride-specific ion channel FluC (126 aa).

4 consecutive transmembrane segments (helical) span residues 1–21 (MIVIFVGLAGVLGALMRFGLD), 40–60 (LATLSVNVLGSFIIGLAGGFA), 72–92 (AISIGIAGGLTTFSSFAVATV), and 104–124 (MVNIGLNLVLGLGAAWLGLSL). Na(+) contacts are provided by glycine 79 and threonine 82.

The protein belongs to the fluoride channel Fluc/FEX (TC 1.A.43) family.

The protein resides in the cell membrane. It catalyses the reaction fluoride(in) = fluoride(out). With respect to regulation, na(+) is not transported, but it plays an essential structural role and its presence is essential for fluoride channel function. Functionally, fluoride-specific ion channel. Important for reducing fluoride concentration in the cell, thus reducing its toxicity. In Renibacterium salmoninarum (strain ATCC 33209 / DSM 20767 / JCM 11484 / NBRC 15589 / NCIMB 2235), this protein is Fluoride-specific ion channel FluC.